We begin with the raw amino-acid sequence, 396 residues long: Elongation factor Tu 1 (396 aa).

The tr-type G domain occupies lysine 10–glutamate 206. A G1 region spans residues glycine 19–threonine 26. Glycine 19–threonine 26 lines the GTP pocket. A Mg(2+)-binding site is contributed by threonine 26. A G2 region spans residues glycine 60–asparagine 64. The G3 stretch occupies residues aspartate 81–glycine 84. Residues aspartate 81–histidine 85 and asparagine 136–aspartate 139 contribute to the GTP site. A G4 region spans residues asparagine 136 to aspartate 139. Residues serine 174–lysine 176 are G5.

The protein belongs to the TRAFAC class translation factor GTPase superfamily. Classic translation factor GTPase family. EF-Tu/EF-1A subfamily. In terms of assembly, monomer.

It is found in the cytoplasm. The enzyme catalyses GTP + H2O = GDP + phosphate + H(+). Its function is as follows. GTP hydrolase that promotes the GTP-dependent binding of aminoacyl-tRNA to the A-site of ribosomes during protein biosynthesis. The chain is Elongation factor Tu 1 from Albidiferax ferrireducens (strain ATCC BAA-621 / DSM 15236 / T118) (Rhodoferax ferrireducens).